The primary structure comprises 221 residues: Probable chemoreceptor glutamine deamidase CheD 1 (221 aa).

This sequence belongs to the CheD family.

The enzyme catalyses L-glutaminyl-[protein] + H2O = L-glutamyl-[protein] + NH4(+). In terms of biological role, probably deamidates glutamine residues to glutamate on methyl-accepting chemotaxis receptors (MCPs), playing an important role in chemotaxis. The polypeptide is Probable chemoreceptor glutamine deamidase CheD 1 (Methanosarcina mazei (strain ATCC BAA-159 / DSM 3647 / Goe1 / Go1 / JCM 11833 / OCM 88) (Methanosarcina frisia)).